We begin with the raw amino-acid sequence, 360 residues long: Protein phosphatase 1L (360 aa).

Residues 1-25 (MIEDTMTLLSLLGRIMRYFLLRPET) are Extracellular-facing. Residues 26 to 42 (LFLLCISLALWSYFFHT) form a helical membrane-spanning segment. The Cytoplasmic segment spans residues 43–360 (DEVKTIVKSS…FRNSSKTEEQ (318 aa)). The PPM-type phosphatase domain maps to 92–351 (NVAVYSIQGR…DNITVMVVKF (260 aa)). Mn(2+) is bound by residues Asp-128, Gly-129, Asp-302, and Asp-342.

This sequence belongs to the PP2C family. Interacts with MAP3K7/TAK1 and MAP3K5. The cofactor is Mg(2+). Requires Mn(2+) as cofactor.

The protein resides in the membrane. It carries out the reaction O-phospho-L-seryl-[protein] + H2O = L-seryl-[protein] + phosphate. It catalyses the reaction O-phospho-L-threonyl-[protein] + H2O = L-threonyl-[protein] + phosphate. In terms of biological role, acts as a suppressor of the SAPK signaling pathways by associating with and dephosphorylating MAP3K7/TAK1 and MAP3K5, and by attenuating the association between MAP3K7/TAK1 and MAP2K4 or MAP2K6. The chain is Protein phosphatase 1L (PPM1L) from Bos taurus (Bovine).